Here is a 459-residue protein sequence, read N- to C-terminus: Argininosuccinate lyase (459 aa).

Belongs to the lyase 1 family. Argininosuccinate lyase subfamily.

The protein localises to the cytoplasm. It catalyses the reaction 2-(N(omega)-L-arginino)succinate = fumarate + L-arginine. Its pathway is amino-acid biosynthesis; L-arginine biosynthesis; L-arginine from L-ornithine and carbamoyl phosphate: step 3/3. This chain is Argininosuccinate lyase, found in Ruminiclostridium cellulolyticum (strain ATCC 35319 / DSM 5812 / JCM 6584 / H10) (Clostridium cellulolyticum).